Reading from the N-terminus, the 437-residue chain is Adenylyltransferase and sulfurtransferase MOCS3 (437 aa).

ATP contacts are provided by residues Gly-82, Asp-103, 110–114 (TNLHR), Lys-127, and 171–172 (DN). Zn(2+)-binding residues include Cys-212 and Cys-215. The active-site Glycyl thioester intermediate; for adenylyltransferase activity is the Cys-229. Cys-287 and Cys-290 together coordinate Zn(2+). Residues 337-435 (SNVPHLLVDV…WTHNIDPEFP (99 aa)) enclose the Rhodanese domain. The active-site Cysteine persulfide intermediate; for sulfurtransferase activity is Cys-391.

The protein in the N-terminal section; belongs to the HesA/MoeB/ThiF family. UBA4 subfamily. The cofactor is Zn(2+).

It localises to the cytoplasm. The protein resides in the cytosol. It catalyses the reaction [molybdopterin-synthase sulfur-carrier protein]-C-terminal Gly-Gly + ATP + H(+) = [molybdopterin-synthase sulfur-carrier protein]-C-terminal Gly-Gly-AMP + diphosphate. It carries out the reaction [molybdopterin-synthase sulfur-carrier protein]-C-terminal Gly-Gly-AMP + S-sulfanyl-L-cysteinyl-[cysteine desulfurase] + AH2 = [molybdopterin-synthase sulfur-carrier protein]-C-terminal-Gly-aminoethanethioate + L-cysteinyl-[cysteine desulfurase] + A + AMP + 2 H(+). The protein operates within tRNA modification; 5-methoxycarbonylmethyl-2-thiouridine-tRNA biosynthesis. Its pathway is cofactor biosynthesis; molybdopterin biosynthesis. Functionally, plays a central role in 2-thiolation of mcm(5)S(2)U at tRNA wobble positions of cytosolic tRNA(Lys), tRNA(Glu) and tRNA(Gln). Also essential during biosynthesis of the molybdenum cofactor. Acts by mediating the C-terminal thiocarboxylation of sulfur carriers URM1 and MOCS2A. Its N-terminus first activates URM1 and MOCS2A as acyl-adenylates (-COAMP), then the persulfide sulfur on the catalytic cysteine is transferred to URM1 and MOCS2A to form thiocarboxylation (-COSH) of their C-terminus. The reaction probably involves hydrogen sulfide that is generated from the persulfide intermediate and that acts as a nucleophile towards URM1 and MOCS2A. Subsequently, a transient disulfide bond is formed. Does not use thiosulfate as sulfur donor; NFS1 probably acting as a sulfur donor for thiocarboxylation reactions. The sequence is that of Adenylyltransferase and sulfurtransferase MOCS3 from Aedes aegypti (Yellowfever mosquito).